A 157-amino-acid polypeptide reads, in one-letter code: Arginine regulator (157 aa).

Belongs to the ArgR family.

The protein resides in the cytoplasm. The protein operates within amino-acid degradation; L-arginine degradation via ADI pathway. In terms of biological role, regulates the transcription of the arc operon, involved in arginine catabolism. This is Arginine regulator (argR1) from Streptococcus pyogenes serotype M3 (strain ATCC BAA-595 / MGAS315).